The chain runs to 95 residues: Co-chaperonin GroES (95 aa).

It belongs to the GroES chaperonin family. Heptamer of 7 subunits arranged in a ring. Interacts with the chaperonin GroEL.

It localises to the cytoplasm. Functionally, together with the chaperonin GroEL, plays an essential role in assisting protein folding. The GroEL-GroES system forms a nano-cage that allows encapsulation of the non-native substrate proteins and provides a physical environment optimized to promote and accelerate protein folding. GroES binds to the apical surface of the GroEL ring, thereby capping the opening of the GroEL channel. The protein is Co-chaperonin GroES of Neisseria meningitidis serogroup C (strain 053442).